The primary structure comprises 95 residues: MTMKTLCLSLIVIGVLILVAVKAEDYVNINSLEEAPEENVNINNLEETPEESRCIQRHRSCRKSSECCGCSVCQCNLFGQNCQCKSGGLIACGKK.

The first 23 residues, 1-23 (MTMKTLCLSLIVIGVLILVAVKA), serve as a signal peptide directing secretion. A propeptide spanning residues 24 to 53 (EDYVNINSLEEAPEENVNINNLEETPEESR) is cleaved from the precursor. Disulfide bonds link Cys-54/Cys-68, Cys-61/Cys-73, Cys-67/Cys-84, Cys-70/Cys-92, and Cys-75/Cys-82. Cys-92 is subject to Cysteine amide.

Belongs to the neurotoxin 02 (plectoxin) family. 02 (plectoxin) subfamily. Expressed by the venom gland.

The protein resides in the secreted. Functionally, this recombinant (non-amidated) toxin shows insecticidal activity on larvae of the housefly Musca domestica and has no activity on a panel of expressed neuronal receptors and ion channels. The polypeptide is Toxin Tbo-IT2 (Tibellus oblongus (Oblong running crab spider)).